The sequence spans 237 residues: uncharacterized protein (237 aa).

Positions 3–116 (SALLIDDERF…RLAKTVQRLL (114 aa)) constitute a Response regulatory domain. The residue at position 54 (aspartate 54) is a 4-aspartylphosphate. The 102-residue stretch at 135–236 (IPCTGLNRIV…LKELKEMLGF (102 aa)) folds into the HTH LytTR-type domain.

This is an uncharacterized protein from Vibrio cholerae serotype O1 (strain ATCC 39315 / El Tor Inaba N16961).